We begin with the raw amino-acid sequence, 674 residues long: DNA-directed RNA polymerase subunit beta' (674 aa).

4 residues coordinate Zn(2+): Cys69, Cys71, Cys87, and Cys90. Mg(2+)-binding residues include Asp494, Asp496, and Asp498.

Belongs to the RNA polymerase beta' chain family. RpoC1 subfamily. In plastids the minimal PEP RNA polymerase catalytic core is composed of four subunits: alpha, beta, beta', and beta''. When a (nuclear-encoded) sigma factor is associated with the core the holoenzyme is formed, which can initiate transcription. It depends on Mg(2+) as a cofactor. Zn(2+) serves as cofactor.

The protein localises to the plastid. Its subcellular location is the chloroplast. The catalysed reaction is RNA(n) + a ribonucleoside 5'-triphosphate = RNA(n+1) + diphosphate. In terms of biological role, DNA-dependent RNA polymerase catalyzes the transcription of DNA into RNA using the four ribonucleoside triphosphates as substrates. In Psilotum nudum (Whisk fern), this protein is DNA-directed RNA polymerase subunit beta'.